A 267-amino-acid polypeptide reads, in one-letter code: Putative hydro-lyase Arth_3576 (267 aa).

The protein belongs to the D-glutamate cyclase family.

The polypeptide is Putative hydro-lyase Arth_3576 (Arthrobacter sp. (strain FB24)).